We begin with the raw amino-acid sequence, 957 residues long: MTQTLSQLENSGAFIERHIGPDAAQQQEMLNAVGAQSLNALTGQIVPKDIQLATPPQVGAPATEYAALAELKAIASRNKRFTSYIGMGYTAVQLPPVILRNMLENPGWYTAYTPYQPEVSQGRLEALLNFQQVTLDLTGLDMASASLLDEATAAAEAMAMAKRVSKLKNANRFFVASNVHPQTLDVVRTRAETFGFEVIVDDAQKVLDHQDVFGVLLQQVGTTGEIHDYTALISELKSRKIVVSVAADIMALVLLTAPGKQGADIVFGSAQRFGVPMGYGGPHAAFFAAKDEYKRSMPGRIIGVSKDAAGNTALRMAMQTREQHIRREKANSNICTSQVLLANIASLYAVYHGPVGLKRIANRIHRLTDILAAGLQQKGLKLRHAHYFDTLCVEVADKAGVLTRAEAAEINLRSDILNAVGITLDETTTRENVMQLFSVLLGDNHGLEIDTLDKDVAHDSRSIQPAMLRDDEILTHPVFNRYHSETEMMRYMHSLERKDLALNQAMIPLGSCTMKLNAAAEMIPITWTEFAELHPFCPPEQAEGYQQMIAQLADWLVKLTGYDAVCMQPNSGAQGEYAGLLAIRHYHESRNEGHRDICLIPASAHGTNPASAHMAGMQVVVVACDKNGNIDLTDLRAKAEQAGDNLSCIMVTYPSTHGVYEETIREVCEVVHQFGGQVYLDGANMNAQVGITSPGFIGADVSHLNLHKTFCIPHGGGGPGMGPIGVKAHLAPFVPGHSVVQIEGMLTRQGAVSAAPFGSASILPISWMYIRMMGAEGLKKASQVAILNANYIASRLQDAFPVLYTGRDGRVAHECILDIRPLKEETGISELDIAKRLIDYGFHAPTMSFPVAGTLMVEPTESESKVELDRFIDAMLAIRAEIDQVKAGVWPLEDNPLVNAPHIQSELVAEWAHPYSREVAVFPAGVADKYWPTVKRLDDVYGDRNLFCSCVPISEYQ.

An N6-(pyridoxal phosphate)lysine modification is found at Lys-708.

This sequence belongs to the GcvP family. In terms of assembly, the glycine cleavage system is composed of four proteins: P, T, L and H. Pyridoxal 5'-phosphate is required as a cofactor.

It catalyses the reaction N(6)-[(R)-lipoyl]-L-lysyl-[glycine-cleavage complex H protein] + glycine + H(+) = N(6)-[(R)-S(8)-aminomethyldihydrolipoyl]-L-lysyl-[glycine-cleavage complex H protein] + CO2. The glycine cleavage system catalyzes the degradation of glycine. The P protein binds the alpha-amino group of glycine through its pyridoxal phosphate cofactor; CO(2) is released and the remaining methylamine moiety is then transferred to the lipoamide cofactor of the H protein. This chain is Glycine dehydrogenase (decarboxylating), found in Shigella flexneri.